The primary structure comprises 1337 residues: Partitioning defective 3 homolog (1337 aa).

At serine 25 the chain carries Phosphoserine. Disordered stretches follow at residues 81-109 (EQDP…SELG) and 143-263 (SSDP…LENM). Threonine 91 carries the post-translational modification Phosphothreonine. Residues 91–100 (TSASSTGTQS) show a composition bias toward low complexity. Composition is skewed to polar residues over residues 150–163 (GLST…FSSE) and 171–188 (TRWS…TGSP). Phosphoserine is present on residues serine 156 and serine 174. A compositionally biased stretch (basic and acidic residues) spans 190–203 (TCDRKKDENYRSLP). Polar residues predominate over residues 207 to 224 (SSWSNQFQRDNARSSLSA). A PDZ 1 domain is found at 271–359 (MVKLVQVPND…ARVIWFHVVP (89 aa)). Serine 383 is modified (phosphoserine). The tract at residues 397–441 (NAPQALPRAPRLSQPPEQLDAHPRLPHSAHASTKPPTAPALAPPN) is disordered. PDZ domains follow at residues 461 to 546 (NIQL…LVFR) and 590 to 677 (EVPL…GMIQ). Tyrosine 489 is modified (phosphotyrosine). Residues serine 692, serine 695, serine 715, serine 728, serine 809, and serine 827 each carry the phosphoserine modification. The interaction with PRKCI and PRKCZ stretch occupies residues 712–936 (RRISHSLYSG…AAIDKSYDKP (225 aa)). The residue at position 834 (lysine 834) is an N6-acetyllysine. A Phosphoserine modification is found at serine 837. An N6-acetyllysine modification is found at lysine 851. A phosphoserine mark is found at serine 852 and serine 873. Disordered stretches follow at residues 866 to 888 (VDDQ…KKSS), 932 to 1015 (SYDK…AKKG), 1028 to 1055 (KHRK…DRVR), 1110 to 1271 (LNAR…LGGH), and 1284 to 1337 (LLRQ…PFYS). N6-acetyllysine is present on lysine 885. An interaction with FRMD4A region spans residues 935 to 1337 (KPMVDDDDEG…TPEKGRPFYS (403 aa)). The span at 939–953 (DDDDEGMETLEEDTE) shows a compositional bias: acidic residues. Residue serine 962 is modified to Phosphoserine; by AURKA. Serine 971 and serine 973 each carry phosphoserine. 2 stretches are compositionally biased toward basic and acidic residues: residues 981–1009 (DPEK…EKDK) and 1030–1043 (RKDD…RIKI). Serine 1046 carries the post-translational modification Phosphoserine. Residues 1050 to 1082 (EEDRVRMKEEQERIQAKTREFRERQARERDYAE) adopt a coiled-coil conformation. The span at 1138–1147 (PGDSNRSTPS) shows a compositional bias: polar residues. Basic and acidic residues predominate over residues 1148–1175 (NHDRIQRLRQEFQQAKQDEDVEDRRRTY). Coiled coils occupy residues 1149 to 1172 (HDRI…EDRR), 1199 to 1222 (VQVQ…YSSL), and 1278 to 1299 (MLET…LKKQ). Residues 1180-1203 (SWSSSRPASQSGRHSVSVEVQVQR) show a composition bias toward low complexity. A compositionally biased stretch (polar residues) spans 1219 to 1240 (YSSLPRQSRKNASSVSQDSWEQ). Residues 1284 to 1296 (LLRQEQRRKEQQL) show a composition bias toward basic and acidic residues. Positions 1318–1327 (SQVARLNRLQ) are enriched in polar residues. The segment covering 1328–1337 (TPEKGRPFYS) has biased composition (basic and acidic residues). Residue lysine 1331 is modified to N6-acetyllysine.

It belongs to the PAR3 family. Component of a complex whose core is composed of ARHGAP17, AMOT, PALS1, PATJ and PARD3/PAR3. Interacts (via PDZ 1 domain) with PARD6A, PARD6B and F11R/JAM1. Interacts with AURKA, AURKB and SIRT2. Interacts with PRKCI. Interacts with PRKCZ. Part of a complex with PARD6A or PARD6B, PRKCI or PRKCZ and CDC42 or RAC1. Interacts with LIMK2 and CDH5. Component of the Par polarity complex, composed of at least phosphorylated PRKCZ, PARD3 and TIAM1. Directly interacts with TIAM1 and TIAM2. Interacts with ECT2 and FBF1. Interacts (via PDZ 3 domain) with PTEN (via C-terminus). Interacts (via coiled-coil domain) with FRMD4A. Found in a complex with PARD3, CYTH1 and FRMD4A. Interacts with SAPCD2. Interacts with PRKCA. In terms of assembly, interacts with PRKCZ. Acetylated. Deacetylated by SIRT2, thereby inhibiting Schwann cell peripheral myelination. Post-translationally, phosphorylation at Ser-827 by PRKCZ and PRKCI occurs at the most apical tip of epithelial cell-cell contacts during the initial phase of tight junction formation and may promote dissociation of the complex with PARD6. EGF-induced Tyr-1127 phosphorylation mediates dissociation from LIMK2. Phosphorylation by AURKA at Ser-962 is required for the normal establishment of neuronal polarity. Isoform 1 is predominantly expressed in lung, glandular stomach, prostate, ovary and uterus. Isoform 1 is also expressed in brain, with a high expression in the cortex, hippocampus and in the striatum. Isoform 2 is predominantly expressed in intestinal epithelial cells, kidney and prostate.

Its subcellular location is the cytoplasm. It localises to the endomembrane system. It is found in the cell junction. The protein resides in the tight junction. The protein localises to the adherens junction. Its subcellular location is the cell cortex. It localises to the cytoskeleton. It is found in the cell membrane. In terms of biological role, adapter protein involved in asymmetrical cell division and cell polarization processes. Seems to play a central role in the formation of epithelial tight junctions. Association with PARD6B may prevent the interaction of PARD3 with F11R/JAM1, thereby preventing tight junction assembly. The PARD6-PARD3 complex links GTP-bound Rho small GTPases to atypical protein kinase C proteins. Required for establishment of neuronal polarity and normal axon formation in cultured hippocampal neurons. Involved in Schwann cell peripheral myelination. Targets the phosphatase PTEN to cell junctions. This chain is Partitioning defective 3 homolog (Pard3), found in Rattus norvegicus (Rat).